The primary structure comprises 206 residues: Dephospho-CoA kinase (206 aa).

Residues 4–204 enclose the DPCK domain; the sequence is IVGLTGGIGS…HQYLQLANAQ (201 aa). Residue 12 to 17 coordinates ATP; it reads GSGKST.

The protein belongs to the CoaE family.

The protein localises to the cytoplasm. The catalysed reaction is 3'-dephospho-CoA + ATP = ADP + CoA + H(+). It functions in the pathway cofactor biosynthesis; coenzyme A biosynthesis; CoA from (R)-pantothenate: step 5/5. Catalyzes the phosphorylation of the 3'-hydroxyl group of dephosphocoenzyme A to form coenzyme A. The sequence is that of Dephospho-CoA kinase from Pasteurella multocida (strain Pm70).